Reading from the N-terminus, the 42-residue chain is MRYFKTYLSAAPVLSTLWLGALAALLIEINRFFPDALTFPFF.

The chain crosses the membrane as a helical span at residues 7–27 (YLSAAPVLSTLWLGALAALLI).

The protein belongs to the PsaJ family.

It is found in the plastid membrane. May help in the organization of the PsaE and PsaF subunits. The protein is Photosystem I reaction center subunit IX of Cuscuta reflexa (Southern Asian dodder).